The following is a 1117-amino-acid chain: DNA-directed RNA polymerase subunit beta (1117 aa).

Positions 1094 to 1117 are disordered; the sequence is QLARRTPPRPTYESLSRESLDDDE. Residues 1108–1117 are compositionally biased toward basic and acidic residues; it reads LSRESLDDDE.

It belongs to the RNA polymerase beta chain family. As to quaternary structure, in cyanobacteria the RNAP catalytic core is composed of 2 alpha, 1 beta, 1 beta', 1 gamma and 1 omega subunit. When a sigma factor is associated with the core the holoenzyme is formed, which can initiate transcription.

The catalysed reaction is RNA(n) + a ribonucleoside 5'-triphosphate = RNA(n+1) + diphosphate. In terms of biological role, DNA-dependent RNA polymerase catalyzes the transcription of DNA into RNA using the four ribonucleoside triphosphates as substrates. The chain is DNA-directed RNA polymerase subunit beta from Trichormus variabilis (strain ATCC 29413 / PCC 7937) (Anabaena variabilis).